Here is a 325-residue protein sequence, read N- to C-terminus: Ferrochelatase (325 aa).

2 residues coordinate Fe cation: histidine 172 and glutamate 267.

The protein belongs to the ferrochelatase family.

It is found in the cytoplasm. The catalysed reaction is heme b + 2 H(+) = protoporphyrin IX + Fe(2+). It functions in the pathway porphyrin-containing compound metabolism; protoheme biosynthesis; protoheme from protoporphyrin-IX: step 1/1. In terms of biological role, catalyzes the ferrous insertion into protoporphyrin IX. The protein is Ferrochelatase of Acidobacterium capsulatum (strain ATCC 51196 / DSM 11244 / BCRC 80197 / JCM 7670 / NBRC 15755 / NCIMB 13165 / 161).